The chain runs to 547 residues: MDISIFLMVFLLFCVSLFLIFFVSCVKLSFFFVEWDFLSFKISVYFNSIMFSLILLLVTISVLVFSTYYLSGELNFNYYYFMLLVFVGSMFSLIFSSGCFSMLVSWDLLGISSFFLVLFYNNWDSCSGAMNTVLTNRLGDFFLFVFFSSTIFSSYYFLSLSFFCWLSSLMLLLASFTKSAQFPFSGWLPKAMSAPTPISSLVHSSTLVTAGLVLIMNFSEMILNKDVIMIIMVVGVFTMFFSSMAALVEEDLKKVVALSTLSQMGFSMLTVGIGLSFVSFIHLLSHALFKSCLFMQVGYLIHCSLGQQDGRNYSNLGNVPYFIQLQLLVTLFCLCGLVFSSGAVSKDYILEFFFSNFFMVVFACMFFFSVFLTFGYSYRLWKGFFMSFSRPVFCFSSSVVMNFLSLLLVLFSIFFIWWMNFNMLCMPCLFLYVDFFVPLFFVVMIMVVGFLCVKLLLKEFVYKFLVDFFAKGWVYGLKNYKFFDLFLGGINSLGVTFFSFTGFWSNSYMKSLYFNSVVIVLVLFFFLVWGCILSLKYALCKRMILAL.

15 helical membrane-spanning segments follow: residues 3 to 23 (ISIF…IFFV), 45 to 65 (YFNS…VLVF), 80 to 100 (YFML…SGCF), 101 to 121 (SMLV…LFYN), 132 to 152 (TVLT…STIF), 198 to 218 (ISSL…IMNF), 227 to 247 (VIMI…MAAL), 264 to 284 (MGFS…IHLL), 319 to 339 (VPYF…GLVF), 352 to 372 (FFFS…SVFL), 399 to 419 (VVMN…IWWM), 430 to 450 (FLYV…VVGF), 460 to 477 (FVYK…VYGL), 485 to 505 (LFLG…GFWS), and 512 to 532 (LYFN…WGCI).

The protein belongs to the complex I subunit 5 family.

It localises to the mitochondrion inner membrane. It catalyses the reaction a ubiquinone + NADH + 5 H(+)(in) = a ubiquinol + NAD(+) + 4 H(+)(out). Its function is as follows. Core subunit of the mitochondrial membrane respiratory chain NADH dehydrogenase (Complex I) that is believed to belong to the minimal assembly required for catalysis. Complex I functions in the transfer of electrons from NADH to the respiratory chain. The immediate electron acceptor for the enzyme is believed to be ubiquinone. In Ascaris suum (Pig roundworm), this protein is NADH-ubiquinone oxidoreductase chain 5 (ND5).